Reading from the N-terminus, the 150-residue chain is Large ribosomal subunit protein bL9 (150 aa).

Belongs to the bacterial ribosomal protein bL9 family.

In terms of biological role, binds to the 23S rRNA. In Cupriavidus metallidurans (strain ATCC 43123 / DSM 2839 / NBRC 102507 / CH34) (Ralstonia metallidurans), this protein is Large ribosomal subunit protein bL9.